Here is a 500-residue protein sequence, read N- to C-terminus: Aldehyde dehydrogenase, mitochondrial (500 aa).

Lysine 35, lysine 56, and lysine 142 each carry N6-acetyllysine. Glycine 245 to glycine 250 contacts NAD(+). The active-site Proton acceptor is the glutamate 268. Cysteine 302 acts as the Nucleophile in catalysis. N6-acetyllysine occurs at positions 358, 366, 409, 411, 424, and 434.

It belongs to the aldehyde dehydrogenase family. As to quaternary structure, homotetramer. Post-translationally, in response to mitochondrial stress, the precursor protein is ubiquitinated by the SIFI complex in the cytoplasm before mitochondrial import, leading to its degradation. Within the SIFI complex, UBR4 initiates ubiquitin chain that are further elongated or branched by KCMF1.

It is found in the mitochondrion matrix. The enzyme catalyses an aldehyde + NAD(+) + H2O = a carboxylate + NADH + 2 H(+). It functions in the pathway alcohol metabolism; ethanol degradation; acetate from ethanol: step 2/2. Required for clearance of cellular formaldehyde, a cytotoxic and carcinogenic metabolite that induces DNA damage. This is Aldehyde dehydrogenase, mitochondrial (ALDH2) from Equus caballus (Horse).